The chain runs to 258 residues: Thiazole synthase (258 aa).

The active-site Schiff-base intermediate with DXP is the Lys-100. 1-deoxy-D-xylulose 5-phosphate contacts are provided by residues Gly-161, 187–188 (AG), and 209–210 (NT).

The protein belongs to the ThiG family. As to quaternary structure, homotetramer. Forms heterodimers with either ThiH or ThiS.

Its subcellular location is the cytoplasm. It catalyses the reaction [ThiS sulfur-carrier protein]-C-terminal-Gly-aminoethanethioate + 2-iminoacetate + 1-deoxy-D-xylulose 5-phosphate = [ThiS sulfur-carrier protein]-C-terminal Gly-Gly + 2-[(2R,5Z)-2-carboxy-4-methylthiazol-5(2H)-ylidene]ethyl phosphate + 2 H2O + H(+). It functions in the pathway cofactor biosynthesis; thiamine diphosphate biosynthesis. In terms of biological role, catalyzes the rearrangement of 1-deoxy-D-xylulose 5-phosphate (DXP) to produce the thiazole phosphate moiety of thiamine. Sulfur is provided by the thiocarboxylate moiety of the carrier protein ThiS. In vitro, sulfur can be provided by H(2)S. The chain is Thiazole synthase from Campylobacter jejuni subsp. jejuni serotype O:2 (strain ATCC 700819 / NCTC 11168).